The chain runs to 528 residues: Protein MGF 505-7R (528 aa).

ANK repeat units follow at residues 54–83 and 261–291; these read SIND…NLHY and NIHR…PPNT.

It belongs to the asfivirus MGF 505 family. In terms of assembly, interacts with host STING1. Interacts with host JAK1; this interaction leads to JAK1 degradation. Interacts with host JAK2; this interaction leads to JAK2 degradation. Interacts with host RELA; this interaction inhibits NF-kappa-B promoter activity.

The protein localises to the host cytoplasm. Functionally, plays a role in virus cell tropism, and may be required for efficient virus replication in macrophages. Interferes with host NF-kappa-B promoter activity mediated by TLR8. Mechanistically, inhibits the phosphorylation and subsequent nuclear translocation of host NF-kappa-B RELA subunit downstream of TLR8. Promotes the expression of the autophagy-related protein host ULK1 to degrade host STING and inhibit the interferon response. Also inhibits JAK1- and JAK2-mediated signaling and thus negatively regulates the IFN-gamma signaling. In African swine fever virus (isolate Tick/Malawi/Lil 20-1/1983) (ASFV), this protein is Protein MGF 505-7R.